The sequence spans 202 residues: ATP-dependent Clp protease proteolytic subunit (202 aa).

The active-site Nucleophile is the Ser98. The active site involves His123.

It belongs to the peptidase S14 family. Fourteen ClpP subunits assemble into 2 heptameric rings which stack back to back to give a disk-like structure with a central cavity, resembling the structure of eukaryotic proteasomes.

It localises to the cytoplasm. The enzyme catalyses Hydrolysis of proteins to small peptides in the presence of ATP and magnesium. alpha-casein is the usual test substrate. In the absence of ATP, only oligopeptides shorter than five residues are hydrolyzed (such as succinyl-Leu-Tyr-|-NHMec, and Leu-Tyr-Leu-|-Tyr-Trp, in which cleavage of the -Tyr-|-Leu- and -Tyr-|-Trp bonds also occurs).. Functionally, cleaves peptides in various proteins in a process that requires ATP hydrolysis. Has a chymotrypsin-like activity. Plays a major role in the degradation of misfolded proteins. This is ATP-dependent Clp protease proteolytic subunit from Syntrophobacter fumaroxidans (strain DSM 10017 / MPOB).